The chain runs to 147 residues: UPF0216 protein MK1676 (147 aa).

This sequence belongs to the UPF0216 family.

The protein is UPF0216 protein MK1676 of Methanopyrus kandleri (strain AV19 / DSM 6324 / JCM 9639 / NBRC 100938).